The following is a 118-amino-acid chain: MARIAGVNLAIQKHVWIGLQSIYGIGRTRSRKVCDAANVAIYTKIRDLSEPEIERLRVEVGKYVIEGDLRREVGMAIKRLMDLNCYRGLRHRRGLPLRGQRTRTNARTRKGPRKAIKK.

The tract at residues 95 to 118 (LPLRGQRTRTNARTRKGPRKAIKK) is disordered.

It belongs to the universal ribosomal protein uS13 family. As to quaternary structure, part of the 30S ribosomal subunit. Forms a loose heterodimer with protein S19. Forms two bridges to the 50S subunit in the 70S ribosome.

Its function is as follows. Located at the top of the head of the 30S subunit, it contacts several helices of the 16S rRNA. In the 70S ribosome it contacts the 23S rRNA (bridge B1a) and protein L5 of the 50S subunit (bridge B1b), connecting the 2 subunits; these bridges are implicated in subunit movement. Contacts the tRNAs in the A and P-sites. This is Small ribosomal subunit protein uS13 from Xylella fastidiosa (strain 9a5c).